The following is a 313-amino-acid chain: MSDKILRIATRRSPLALWQAEYVQRRLIACHPGLRVELLPMVTRGDVILDTPLAKVGGKGLFVKELEQAMLSGSADIAVHSMKDVPVAFPPGLGLVAICEREDPHDAFVSHHYTSVDSLPQGAIVGTSSLRRQCQLSARRPDLVIRSLRGNVGTRLGKLDAGEYDAIILAVAGLKRLGLGDRIRQVMPAEESLPAVGQGAVGIECRLDDIQTIALLAALNHSETACRVSAERAMNTRLEGGCQVPIGSYALLEDDQLWLRGLVGSPDGNEMVRGERRGPRADAEKMGISLAEELLENGARDILAAVYQGNPPA.

Position 242 is an S-(dipyrrolylmethanemethyl)cysteine (Cys242).

The protein belongs to the HMBS family. In terms of assembly, monomer. Dipyrromethane serves as cofactor.

It carries out the reaction 4 porphobilinogen + H2O = hydroxymethylbilane + 4 NH4(+). Its pathway is porphyrin-containing compound metabolism; protoporphyrin-IX biosynthesis; coproporphyrinogen-III from 5-aminolevulinate: step 2/4. Tetrapolymerization of the monopyrrole PBG into the hydroxymethylbilane pre-uroporphyrinogen in several discrete steps. This chain is Porphobilinogen deaminase, found in Erwinia tasmaniensis (strain DSM 17950 / CFBP 7177 / CIP 109463 / NCPPB 4357 / Et1/99).